The chain runs to 124 residues: MKRLETIRHMWSVVYDHFDIVNGKECCYVHTHSSNQNPIPSTVKTNLYMKTMGSCIQMDSMEALEYLSELKESGGWSPRPEMQEFEYPDGVEDTESIERLVEEFFNRSELQAGKLVKFGNSINC.

It belongs to the Schlafen family. Subgroup poxviridae B3 subfamily.

The sequence is that of Schlafen-like protein from Homo sapiens (Human).